The sequence spans 670 residues: DNA ligase (670 aa).

NAD(+) is bound by residues 32-36 (DAEYD), 81-82 (SL), and E111. Catalysis depends on K113, which acts as the N6-AMP-lysine intermediate. Positions 134, 171, 290, and 314 each coordinate NAD(+). C408, C411, C426, and C432 together coordinate Zn(2+). Positions 591–670 (EEALSLKGQT…DGLLAVLAGE (80 aa)) constitute a BRCT domain.

Belongs to the NAD-dependent DNA ligase family. LigA subfamily. Mg(2+) serves as cofactor. Mn(2+) is required as a cofactor.

The enzyme catalyses NAD(+) + (deoxyribonucleotide)n-3'-hydroxyl + 5'-phospho-(deoxyribonucleotide)m = (deoxyribonucleotide)n+m + AMP + beta-nicotinamide D-nucleotide.. Functionally, DNA ligase that catalyzes the formation of phosphodiester linkages between 5'-phosphoryl and 3'-hydroxyl groups in double-stranded DNA using NAD as a coenzyme and as the energy source for the reaction. It is essential for DNA replication and repair of damaged DNA. This is DNA ligase from Shewanella sediminis (strain HAW-EB3).